The following is a 53-amino-acid chain: MNIRLMFTLIALLVLTVSFSGANSCFKRNRQCKGSFLKSACCEGLKCVNGRCT.

Residues 1 to 23 form the signal peptide; it reads MNIRLMFTLIALLVLTVSFSGAN. Intrachain disulfides connect C25-C42, C32-C47, and C41-C52.

In terms of tissue distribution, expressed by the venom gland.

It is found in the secreted. Functionally, may have neurotoxic activity. This Dinoponera quadriceps (South American ant) protein is U1-poneritoxin-Dq5a.